The chain runs to 66 residues: Large ribosomal subunit protein bL35 (66 aa).

Over residues 1–26 (MPKMKTHRGAAKRVKRTASGKLKRSR) the composition is skewed to basic residues. Positions 1 to 49 (MPKMKTHRGAAKRVKRTASGKLKRSRAFTSHLFANKSTKQKRKLRKASL) are disordered.

This sequence belongs to the bacterial ribosomal protein bL35 family.

This chain is Large ribosomal subunit protein bL35, found in Staphylococcus carnosus (strain TM300).